Reading from the N-terminus, the 380-residue chain is Epoxyqueuosine reductase (380 aa).

The active-site Proton donor is the Asp-134. The region spanning 178 to 208 is the 4Fe-4S ferredoxin-type 1 domain; that stretch reads FPPDKPIEDQCGGCTKCIDICPTGALIQGGQ. [4Fe-4S] cluster is bound by residues Cys-188, Cys-191, Cys-194, Cys-198, Cys-214, Cys-240, Cys-243, and Cys-247. The 4Fe-4S ferredoxin-type 2 domain maps to 226-258; that stretch reads PEEYRDKIGNRIYGCDTCQTVCPKNKGMDFHNH.

Belongs to the QueG family. In terms of assembly, monomer. Requires cob(II)alamin as cofactor. It depends on [4Fe-4S] cluster as a cofactor.

The protein localises to the cytoplasm. The catalysed reaction is epoxyqueuosine(34) in tRNA + AH2 = queuosine(34) in tRNA + A + H2O. It functions in the pathway tRNA modification; tRNA-queuosine biosynthesis. Its function is as follows. Catalyzes the conversion of epoxyqueuosine (oQ) to queuosine (Q), which is a hypermodified base found in the wobble positions of tRNA(Asp), tRNA(Asn), tRNA(His) and tRNA(Tyr). The sequence is that of Epoxyqueuosine reductase from Bacillus cereus (strain ATCC 14579 / DSM 31 / CCUG 7414 / JCM 2152 / NBRC 15305 / NCIMB 9373 / NCTC 2599 / NRRL B-3711).